The primary structure comprises 483 residues: Glutamate--tRNA ligase (483 aa).

A 'HIGH' region motif is present at residues proline 11 to asparagine 21. Positions lysine 252–arginine 256 match the 'KMSKS' region motif. Residue lysine 255 participates in ATP binding.

This sequence belongs to the class-I aminoacyl-tRNA synthetase family. Glutamate--tRNA ligase type 1 subfamily. In terms of assembly, monomer.

Its subcellular location is the cytoplasm. The catalysed reaction is tRNA(Glu) + L-glutamate + ATP = L-glutamyl-tRNA(Glu) + AMP + diphosphate. Functionally, catalyzes the attachment of glutamate to tRNA(Glu) in a two-step reaction: glutamate is first activated by ATP to form Glu-AMP and then transferred to the acceptor end of tRNA(Glu). The chain is Glutamate--tRNA ligase from Bacillus velezensis (strain DSM 23117 / BGSC 10A6 / LMG 26770 / FZB42) (Bacillus amyloliquefaciens subsp. plantarum).